Consider the following 259-residue polypeptide: MDHLQLAAHTFSSRLILGTGKFSSAAVMLEAVKASGAQLVTVALRRFNREQLEDDLFGPLSELPGITLMPNTSGASTAAEAIKAANISRELSGSPFIKVEIHPNPQHLMPDPIETMEAARVLASEGFLVMPYISPDPVLAKRLEEVGCASVMPLGSAIGSGQGLASAAMLSIIIRESSIPVIVDAGLRAPSEAARAMEMGCSAVLVNSAIAASDNPAEMAAAFRDSTDAGRRAFKAGLMRESREAVATSPLTSFLGEQS.

The active-site Schiff-base intermediate with DXP is lysine 98. Residues glycine 159, alanine 185–glycine 186, and asparagine 207–serine 208 contribute to the 1-deoxy-D-xylulose 5-phosphate site.

The protein belongs to the ThiG family. Homotetramer. Forms heterodimers with either ThiH or ThiS.

Its subcellular location is the cytoplasm. It catalyses the reaction [ThiS sulfur-carrier protein]-C-terminal-Gly-aminoethanethioate + 2-iminoacetate + 1-deoxy-D-xylulose 5-phosphate = [ThiS sulfur-carrier protein]-C-terminal Gly-Gly + 2-[(2R,5Z)-2-carboxy-4-methylthiazol-5(2H)-ylidene]ethyl phosphate + 2 H2O + H(+). Its pathway is cofactor biosynthesis; thiamine diphosphate biosynthesis. Functionally, catalyzes the rearrangement of 1-deoxy-D-xylulose 5-phosphate (DXP) to produce the thiazole phosphate moiety of thiamine. Sulfur is provided by the thiocarboxylate moiety of the carrier protein ThiS. In vitro, sulfur can be provided by H(2)S. The sequence is that of Thiazole synthase from Chlorobium phaeovibrioides (strain DSM 265 / 1930) (Prosthecochloris vibrioformis (strain DSM 265)).